The sequence spans 252 residues: tRNA (guanine-N(7)-)-methyltransferase (252 aa).

S-adenosyl-L-methionine is bound by residues E51, D76, N103, and D125. Residue D125 is part of the active site. Substrate contacts are provided by residues K129, D159, and 199 to 202 (TYYE).

This sequence belongs to the class I-like SAM-binding methyltransferase superfamily. TrmB family.

It carries out the reaction guanosine(46) in tRNA + S-adenosyl-L-methionine = N(7)-methylguanosine(46) in tRNA + S-adenosyl-L-homocysteine. It functions in the pathway tRNA modification; N(7)-methylguanine-tRNA biosynthesis. Its function is as follows. Catalyzes the formation of N(7)-methylguanine at position 46 (m7G46) in tRNA. The polypeptide is tRNA (guanine-N(7)-)-methyltransferase (Bacteroides thetaiotaomicron (strain ATCC 29148 / DSM 2079 / JCM 5827 / CCUG 10774 / NCTC 10582 / VPI-5482 / E50)).